Here is a 90-residue protein sequence, read N- to C-terminus: Cell division topological specificity factor (90 aa).

Belongs to the MinE family.

In terms of biological role, prevents the cell division inhibition by proteins MinC and MinD at internal division sites while permitting inhibition at polar sites. This ensures cell division at the proper site by restricting the formation of a division septum at the midpoint of the long axis of the cell. In Francisella tularensis subsp. tularensis (strain FSC 198), this protein is Cell division topological specificity factor.